A 44-amino-acid chain; its full sequence is Protein PsbN (44 aa).

Residues 6-26 traverse the membrane as a helical segment; it reads FFFSLFVWCLLLSITAYSLYV.

The protein belongs to the PsbN family.

The protein localises to the plastid. Its subcellular location is the chloroplast thylakoid membrane. May play a role in photosystem I and II biogenesis. The protein is Protein PsbN of Tupiella akineta (Green alga).